The following is a 508-amino-acid chain: Cytochrome P450 4A12 (508 aa).

2 consecutive transmembrane segments (helical) span residues 10 to 30 (IFPG…VLLL) and 120 to 140 (FLAP…WFQH). Glutamate 319 provides a ligand contact to heme. Serine 438 carries the phosphoserine modification. Cysteine 455 lines the heme pocket.

It belongs to the cytochrome P450 family. Requires heme as cofactor. As to expression, expressed at proximal straight tubules and preglomerular arteries of the outer medulla as well in the cortex regions of kidney (at protein level).

It localises to the endoplasmic reticulum membrane. The protein resides in the microsome membrane. The catalysed reaction is an organic molecule + reduced [NADPH--hemoprotein reductase] + O2 = an alcohol + oxidized [NADPH--hemoprotein reductase] + H2O + H(+). It catalyses the reaction dodecanoate + reduced [NADPH--hemoprotein reductase] + O2 = 12-hydroxydodecanoate + oxidized [NADPH--hemoprotein reductase] + H2O + H(+). It carries out the reaction dodecanoate + reduced [NADPH--hemoprotein reductase] + O2 = (11R)-hydroxydodecanoate + oxidized [NADPH--hemoprotein reductase] + H2O + H(+). The enzyme catalyses (5Z,8Z,11Z,14Z)-eicosatetraenoate + reduced [NADPH--hemoprotein reductase] + O2 = 20-hydroxy-(5Z,8Z,11Z,14Z)-eicosatetraenoate + oxidized [NADPH--hemoprotein reductase] + H2O + H(+). The catalysed reaction is prostaglandin A1 + reduced [NADPH--hemoprotein reductase] + O2 = 20-hydroxy prostaglandin A1 + oxidized [NADPH--hemoprotein reductase] + H2O + H(+). It functions in the pathway lipid metabolism; fatty acid metabolism. Activated by cytochrome b5 and phosphatidylserine. A cytochrome P450 monooxygenase involved in the metabolism of fatty acids. Catalyzes predominantly the oxidation of the terminal carbon (omega-oxidation) of saturated and unsaturated fatty acids. May act as a major omega-hydroxylase for dodecanoic (lauric) acid in kidney. At preglomerular arteries, may participate in omega-hydroxylation of (5Z,8Z,11Z,14Z)-eicosatetraenoic acid (arachidonate) to 20-hydroxyeicosatetraenoic acid (20-HETE), a signaling molecule acting both as vasoconstrictive and natriuretic with overall effect on arterial blood pressure. Can also catalyze the oxidation of the penultimate carbon (omega-1 oxidation) of fatty acids with lower efficiency, displaying a preference for the (R)-stereoisomer. Mechanistically, uses molecular oxygen inserting one oxygen atom into a substrate, and reducing the second into a water molecule, with two electrons provided by NADPH via cytochrome P450 reductase (NADPH--hemoprotein reductase). The chain is Cytochrome P450 4A12 (Cyp4a12) from Rattus norvegicus (Rat).